The primary structure comprises 337 residues: Monoacylglycerol lipase ABHD6 (337 aa).

Over 1 to 8 (MDLDVVNM) the chain is Extracellular. The chain crosses the membrane as a helical; Signal-anchor for type II membrane protein span at residues 9–29 (FVIAGGTLAIPILAFVASFLL). Topologically, residues 30-337 (WPSALIRIYY…HNTDNNKKLD (308 aa)) are cytoplasmic. Residues 72 to 313 (PSILMLHGFS…CGHSVVMERP (242 aa)) enclose the AB hydrolase-1 domain. Residue Phe-80 participates in (9Z)-octadecenoate binding. The Nucleophile role is filled by Ser-148. Met-149 is a (9Z)-octadecenoate binding site. Active-site charge relay system residues include Asp-278 and His-306. Position 306 (His-306) interacts with (9Z)-octadecenoate.

This sequence belongs to the AB hydrolase superfamily.

The protein resides in the late endosome membrane. Its subcellular location is the lysosome membrane. It localises to the mitochondrion membrane. The catalysed reaction is Hydrolyzes glycerol monoesters of long-chain fatty acids.. The enzyme catalyses 1-octanoylglycerol + H2O = octanoate + glycerol + H(+). It catalyses the reaction 1-decanoylglycerol + H2O = decanoate + glycerol + H(+). It carries out the reaction 1-dodecanoylglycerol + H2O = dodecanoate + glycerol + H(+). The catalysed reaction is 1-tetradecanoylglycerol + H2O = tetradecanoate + glycerol + H(+). The enzyme catalyses 2-hexadecanoylglycerol + H2O = glycerol + hexadecanoate + H(+). It catalyses the reaction 2-(9Z-octadecenoyl)-glycerol + H2O = glycerol + (9Z)-octadecenoate + H(+). It carries out the reaction 1-(9Z-octadecenoyl)-glycerol + H2O = glycerol + (9Z)-octadecenoate + H(+). The catalysed reaction is 2-(9Z,12Z-octadecadienoyl)-glycerol + H2O = (9Z,12Z)-octadecadienoate + glycerol + H(+). The enzyme catalyses 2-(5Z,8Z,11Z,14Z-eicosatetraenoyl)-glycerol + H2O = glycerol + (5Z,8Z,11Z,14Z)-eicosatetraenoate + H(+). It catalyses the reaction 1-(5Z,8Z,11Z,14Z-eicosatetraenoyl)-glycerol + H2O = glycerol + (5Z,8Z,11Z,14Z)-eicosatetraenoate + H(+). It carries out the reaction 1-(9Z,12Z-octadecadienoyl)-glycerol + H2O = (9Z,12Z)-octadecadienoate + glycerol + H(+). The catalysed reaction is 3-(9Z-octadecenoyl)-sn-glycero-1-phospho-(3'-(9Z-octadecenoyl)-1'-sn-glycerol) + H2O = 3-(9Z-octadecenoyl)-sn-glycero-1-phospho-(1'-sn-glycerol) + (9Z)-octadecenoate + H(+). The enzyme catalyses (S,S)-2-(9Z-octadecenoyl)-sn-glycero-1-phospho-(2'-(9Z-octadecenoyl)-1'-sn-glycerol) + H2O = (S,S)-2-(9Z-octadecenoyl)-sn-glycero-1-phospho-(1'-sn-glycerol) + (9Z)-octadecenoate + H(+). It catalyses the reaction (R,R)-2-(9Z-octadecenoyl)-sn-glycero-3-phospho-(2'-(9Z-octadecenoyl)-3'-sn-glycerol) + H2O = (R,R)-2-(9Z-octadecenoyl)-sn-glycero-3-phospho-(3'-sn-glycerol) + (9Z)-octadecenoate + H(+). Lipase that preferentially hydrolysis medium-chain saturated monoacylglycerols including 2-arachidonoylglycerol. Through 2-arachidonoylglycerol degradation may regulate endocannabinoid signaling pathways. Also has a lysophosphatidyl lipase activity with a preference for lysophosphatidylglycerol among other lysophospholipids. Also able to degrade bis(monoacylglycero)phosphate (BMP) and constitutes the major enzyme for BMP catabolism. BMP, also known as lysobisphosphatidic acid, is enriched in late endosomes and lysosomes and plays a key role in the formation of intraluminal vesicles and in lipid sorting. This chain is Monoacylglycerol lipase ABHD6, found in Homo sapiens (Human).